The chain runs to 370 residues: Elongation factor Ts, mitochondrial (370 aa).

Residues 1–29 (MALLSAAPRALRLPRRLPLGAALPALRAL) constitute a mitochondrion transit peptide.

The protein belongs to the EF-Ts family.

Its subcellular location is the mitochondrion. Associates with the EF-Tu.GDP complex and induces the exchange of GDP to GTP. It remains bound to the aminoacyl-tRNA.EF-Tu.GTP complex up to the GTP hydrolysis stage on the ribosome. This chain is Elongation factor Ts, mitochondrial, found in Cryptococcus neoformans var. neoformans serotype D (strain B-3501A) (Filobasidiella neoformans).